The sequence spans 316 residues: Lipoyl synthase (316 aa).

[4Fe-4S] cluster-binding residues include C66, C71, C77, C92, C96, C99, and S306. The Radical SAM core domain occupies 78–295; it reads YSQQTATFMV…ADIAKSMGFK (218 aa).

It belongs to the radical SAM superfamily. Lipoyl synthase family. The cofactor is [4Fe-4S] cluster.

It is found in the cytoplasm. The enzyme catalyses [[Fe-S] cluster scaffold protein carrying a second [4Fe-4S](2+) cluster] + N(6)-octanoyl-L-lysyl-[protein] + 2 oxidized [2Fe-2S]-[ferredoxin] + 2 S-adenosyl-L-methionine + 4 H(+) = [[Fe-S] cluster scaffold protein] + N(6)-[(R)-dihydrolipoyl]-L-lysyl-[protein] + 4 Fe(3+) + 2 hydrogen sulfide + 2 5'-deoxyadenosine + 2 L-methionine + 2 reduced [2Fe-2S]-[ferredoxin]. Its pathway is protein modification; protein lipoylation via endogenous pathway; protein N(6)-(lipoyl)lysine from octanoyl-[acyl-carrier-protein]: step 2/2. Catalyzes the radical-mediated insertion of two sulfur atoms into the C-6 and C-8 positions of the octanoyl moiety bound to the lipoyl domains of lipoate-dependent enzymes, thereby converting the octanoylated domains into lipoylated derivatives. This Rhodopirellula baltica (strain DSM 10527 / NCIMB 13988 / SH1) protein is Lipoyl synthase.